The sequence spans 178 residues: ATP-dependent protease subunit HslV (178 aa).

T7 is a catalytic residue. 3 residues coordinate Na(+): G162, C165, and T168.

Belongs to the peptidase T1B family. HslV subfamily. As to quaternary structure, a double ring-shaped homohexamer of HslV is capped on each side by a ring-shaped HslU homohexamer. The assembly of the HslU/HslV complex is dependent on binding of ATP.

The protein resides in the cytoplasm. It carries out the reaction ATP-dependent cleavage of peptide bonds with broad specificity.. Its activity is regulated as follows. Allosterically activated by HslU binding. Its function is as follows. Protease subunit of a proteasome-like degradation complex believed to be a general protein degrading machinery. In Burkholderia vietnamiensis (strain G4 / LMG 22486) (Burkholderia cepacia (strain R1808)), this protein is ATP-dependent protease subunit HslV.